Consider the following 263-residue polypeptide: Glucosamine-6-phosphate deaminase (263 aa).

The active-site Proton acceptor; for enolization step is aspartate 72. Aspartate 141 serves as the catalytic For ring-opening step. Histidine 143 (proton acceptor; for ring-opening step) is an active-site residue. Glutamate 148 acts as the For ring-opening step in catalysis.

This sequence belongs to the glucosamine/galactosamine-6-phosphate isomerase family. NagB subfamily.

It catalyses the reaction alpha-D-glucosamine 6-phosphate + H2O = beta-D-fructose 6-phosphate + NH4(+). It participates in amino-sugar metabolism; N-acetylneuraminate degradation; D-fructose 6-phosphate from N-acetylneuraminate: step 5/5. Its activity is regulated as follows. Allosterically activated by N-acetylglucosamine 6-phosphate (GlcNAc6P). Catalyzes the reversible isomerization-deamination of glucosamine 6-phosphate (GlcN6P) to form fructose 6-phosphate (Fru6P) and ammonium ion. This Phocaeicola vulgatus (strain ATCC 8482 / DSM 1447 / JCM 5826 / CCUG 4940 / NBRC 14291 / NCTC 11154) (Bacteroides vulgatus) protein is Glucosamine-6-phosphate deaminase.